Reading from the N-terminus, the 381-residue chain is 1-deoxy-D-xylulose 5-phosphate reductoisomerase (381 aa).

Positions 11, 12, 13, 14, 36, 37, and 121 each coordinate NADPH. Lys122 contacts 1-deoxy-D-xylulose 5-phosphate. Position 123 (Glu123) interacts with NADPH. Residue Asp147 coordinates Mn(2+). 1-deoxy-D-xylulose 5-phosphate contacts are provided by Ser148, Glu149, Ser173, and His196. Mn(2+) is bound at residue Glu149. An NADPH-binding site is contributed by Gly202. Ser209, Asn214, Lys215, and Glu218 together coordinate 1-deoxy-D-xylulose 5-phosphate. Glu218 contributes to the Mn(2+) binding site.

This sequence belongs to the DXR family. Mg(2+) is required as a cofactor. Requires Mn(2+) as cofactor.

It carries out the reaction 2-C-methyl-D-erythritol 4-phosphate + NADP(+) = 1-deoxy-D-xylulose 5-phosphate + NADPH + H(+). It functions in the pathway isoprenoid biosynthesis; isopentenyl diphosphate biosynthesis via DXP pathway; isopentenyl diphosphate from 1-deoxy-D-xylulose 5-phosphate: step 1/6. Functionally, catalyzes the NADPH-dependent rearrangement and reduction of 1-deoxy-D-xylulose-5-phosphate (DXP) to 2-C-methyl-D-erythritol 4-phosphate (MEP). The sequence is that of 1-deoxy-D-xylulose 5-phosphate reductoisomerase from Acetivibrio thermocellus (strain ATCC 27405 / DSM 1237 / JCM 9322 / NBRC 103400 / NCIMB 10682 / NRRL B-4536 / VPI 7372) (Clostridium thermocellum).